Reading from the N-terminus, the 81-residue chain is Sulfur carrier protein TusA (81 aa).

The active-site Cysteine persulfide intermediate is the cysteine 19.

The protein belongs to the sulfur carrier protein TusA family.

It is found in the cytoplasm. In terms of biological role, sulfur carrier protein which probably makes part of a sulfur-relay system. This chain is Sulfur carrier protein TusA, found in Vibrio vulnificus (strain CMCP6).